A 196-amino-acid polypeptide reads, in one-letter code: MSRYRGPRFKKIRRLGTLPGLTSKRPKSGSDLKTQLRSGKRSQYRIRLEEKQKLRFHYGLTERQLVRYVHIAGKAKGSTGQVLLQLLEMRLDNILFRLGMASTIPRARQLVNHRHILVNGRIVDIPSYRCKPRDIITTKDKQRSKALIQNYIASPPPEELPKHLTIDSFQYKGLVNQIIDSKWIGLKINELLVVEY.

A disordered region spans residues Gly-16–Leu-36. One can recognise an S4 RNA-binding domain in the interval Met-89 to Asn-150.

The protein belongs to the universal ribosomal protein uS4 family. In terms of assembly, part of the 30S ribosomal subunit. Contacts protein S5. The interaction surface between S4 and S5 is involved in control of translational fidelity.

The protein localises to the plastid. Its subcellular location is the chloroplast. In terms of biological role, one of the primary rRNA binding proteins, it binds directly to 16S rRNA where it nucleates assembly of the body of the 30S subunit. Its function is as follows. With S5 and S12 plays an important role in translational accuracy. This is Small ribosomal subunit protein uS4c (rps4) from Rhapis humilis (Slender lady palm).